Reading from the N-terminus, the 102-residue chain is DET1- and DDB1-associated protein 1 (102 aa).

Residues 67 to 102 (NAAKKRDQEQVEIEGENSAPPRKIARTDSQDMNEDT) form a disordered region.

This sequence belongs to the DDA1 family. As to quaternary structure, component of numerous DCX (DDB1-CUL4-X-box) E3 ubiquitin-protein ligase complexes which consist of a core of DDB1, cullin-4 (CUL4A or CUL4B), DDA1 and RBX1.

It participates in protein modification; protein ubiquitination. Functions as a component of numerous distinct DCX (DDB1-CUL4-X-box) E3 ubiquitin-protein ligase complexes which mediate the ubiquitination and subsequent proteasomal degradation of target proteins. In the DCX complexes, acts as a scaffolding subunit required to stabilize the complex. The chain is DET1- and DDB1-associated protein 1 from Gallus gallus (Chicken).